The following is a 128-amino-acid chain: MIKKSEMTKKAIAHGKYIRGSASKVRRVLDQIRGKSYRDALIMLEFMPYRSTDPITKVLRSAVANAEHNLGMEPSSLVISSASADNGPVMKRFRPRAQGRAFSIKKQTCHISISVESAPNQTNTEAQN.

This sequence belongs to the universal ribosomal protein uL22 family. As to quaternary structure, part of the 50S ribosomal subunit.

In terms of biological role, this protein binds specifically to 23S rRNA; its binding is stimulated by other ribosomal proteins, e.g. L4, L17, and L20. It is important during the early stages of 50S assembly. It makes multiple contacts with different domains of the 23S rRNA in the assembled 50S subunit and ribosome. Its function is as follows. The globular domain of the protein is located near the polypeptide exit tunnel on the outside of the subunit, while an extended beta-hairpin is found that lines the wall of the exit tunnel in the center of the 70S ribosome. The protein is Large ribosomal subunit protein uL22 of Prochlorococcus marinus (strain MIT 9515).